A 519-amino-acid polypeptide reads, in one-letter code: Acetylcholine receptor subunit gamma (519 aa).

A signal peptide spans 1–22 (MQGGQRPHLLLLLLAVCLGAQS). Residues 23–240 (RNQEERLLAD…VVFYLLIQRK (218 aa)) lie on the Extracellular side of the membrane. Asparagine 52 and asparagine 163 each carry an N-linked (GlcNAc...) asparagine glycan. Residues cysteine 150 and cysteine 164 are joined by a disulfide bond. 3 helical membrane-spanning segments follow: residues 241–265 (PLFYVINIIAPCVLISSVAILIYFL), 274–292 (CTVATNVLLAQTVFLFLVA), and 308–329 (YLTFLMVVTILIVVNSVVVLNV). Residues 330-476 (SLRSPHTHSM…WLLVGRVLDR (147 aa)) are Cytoplasmic-facing. Residues 477-497 (VCFLAMLSLFICGTAGIFLMA) form a helical membrane-spanning segment.

It belongs to the ligand-gated ion channel (TC 1.A.9) family. Acetylcholine receptor (TC 1.A.9.1) subfamily. Gamma/CHRNG sub-subfamily. Pentamer of two alpha chains, and one each of the beta, delta, and gamma (in immature muscle) or epsilon (in mature muscle) chains. In terms of tissue distribution, at least in myotubes of skeletal muscle.

The protein resides in the postsynaptic cell membrane. It localises to the cell membrane. The enzyme catalyses K(+)(in) = K(+)(out). It catalyses the reaction Na(+)(in) = Na(+)(out). In terms of biological role, after binding acetylcholine, the AChR responds by an extensive change in conformation that affects all subunits and leads to opening of an ion-conducting channel across the plasma membrane. The protein is Acetylcholine receptor subunit gamma (Chrng) of Mus musculus (Mouse).